Here is a 496-residue protein sequence, read N- to C-terminus: Nectin 1a (496 aa).

Residues 1 to 20 form the signal peptide; the sequence is MMFINLLLRLMCVFLIGADG. Over 21–349 the chain is Extracellular; that stretch reads QMVQMESSKA…FQDQQQAGVV (329 aa). In terms of domain architecture, Ig-like V-type spans 34-138; it reads GSQVELPCQF…GNRENMVNLT (105 aa). C41 and C121 are disulfide-bonded. N-linked (GlcNAc...) asparagine glycans are attached at residues N62 and N136. 2 consecutive Ig-like C2-type domains span residues 143-238 and 243-330; these read PMIQ…VTLN and PEVI…VIVT. Intrachain disulfides connect C168-C222 and C265-C312. N282 carries an N-linked (GlcNAc...) asparagine glycan. Residues 350 to 370 traverse the membrane as a helical segment; sequence IGGAVVCGTVLLAAVTLLVVF. Topologically, residues 371-496 are cytoplasmic; that stretch reads LYRRRCMFKG…SVISKEEWYV (126 aa).

It belongs to the nectin family. In terms of assembly, cis- and trans-homodimer. Can form trans-heterodimers. In terms of tissue distribution, expressed in the developing eye and nervous system.

The protein localises to the cell membrane. It localises to the cell junction. It is found in the adherens junction. Its function is as follows. Cell adhesion molecule that promotes cell-cell contacts and plays important roles in the development of the nervous system. Acts by forming homophilic or heterophilic trans-dimers. The chain is Nectin 1a from Danio rerio (Zebrafish).